Here is a 220-residue protein sequence, read N- to C-terminus: Large ribosomal subunit protein uL6c (220 aa).

The N-terminal 38 residues, 1-38 (MSLPLPSHMKSVFLGMKVEISTSVPVTRIGFWRKSVDC), are a transit peptide targeting the chloroplast.

As to quaternary structure, component of the chloroplast large ribosomal subunit (LSU). Mature 70S chloroplast ribosomes of higher plants consist of a small (30S) and a large (50S) subunit. The 30S small subunit contains 1 molecule of ribosomal RNA (16S rRNA) and 24 different proteins. The 50S large subunit contains 3 rRNA molecules (23S, 5S and 4.5S rRNA) and 33 different proteins.

The protein localises to the plastid. The protein resides in the chloroplast. Component of the chloroplast ribosome (chloro-ribosome), a dedicated translation machinery responsible for the synthesis of chloroplast genome-encoded proteins, including proteins of the transcription and translation machinery and components of the photosynthetic apparatus. The polypeptide is Large ribosomal subunit protein uL6c (RPL6) (Spinacia oleracea (Spinach)).